The following is a 1284-amino-acid chain: DNA topoisomerase 2, mitochondrial (1284 aa).

The transit peptide at 1–35 (MSKLLNNNNHKNLTNYLKFGKGIINNLNNKSKQVG) directs the protein to the mitochondrion. Residues asparagine 183, asparagine 212, 240 to 242 (GSN), and 253 to 260 (GRNGFGAK) each bind ATP. The segment at 445 to 447 (KKK) is interaction with DNA. 478-480 (QSK) lines the ATP pocket. One can recognise a Toprim domain in the interval 560 to 677 (CTLIITEGDS…NLLKRGFLVE (118 aa)). Positions 566, 646, and 648 each coordinate Mg(2+). A Topo IIA-type catalytic domain is found at 810–1232 (IPSLIDGLKP…DPKSLWTADL (423 aa)). Residue tyrosine 900 is the O-(5'-phospho-DNA)-tyrosine intermediate of the active site. A disordered region spans residues 1245–1284 (EFQKKPLKTSSSSSFDVSSSSESAKLSSTRKSKTDKIKSK). A compositionally biased stretch (low complexity) spans 1254 to 1271 (SSSSSFDVSSSSESAKLS).

It belongs to the type II topoisomerase family. Homodimer. Requires Mg(2+) as cofactor. The cofactor is Mn(2+). It depends on Ca(2+) as a cofactor.

It localises to the mitochondrion. The enzyme catalyses ATP-dependent breakage, passage and rejoining of double-stranded DNA.. Functionally, control of topological states of DNA by transient breakage and subsequent rejoining of DNA strands. Topoisomerase II makes double-strand breaks. The polypeptide is DNA topoisomerase 2, mitochondrial (top2mt) (Dictyostelium discoideum (Social amoeba)).